Reading from the N-terminus, the 704-residue chain is Neutral ceramidase (704 aa).

A signal peptide spans 1–23 (MANSKMAFLAFLAVSFLCGLVSA). A glycan (N-linked (GlcNAc...) asparagine) is linked at Asn230. The Nucleophile role is filled by Ser276. Asn362, Asn550, and Asn598 each carry an N-linked (GlcNAc...) asparagine glycan.

This sequence belongs to the neutral ceramidase family. Post-translationally, N-glycosylated. As to expression, widely expressed in different tissues but enriched in neurons at all stages of development.

Its subcellular location is the secreted. It catalyses the reaction an N-acylsphing-4-enine + H2O = sphing-4-enine + a fatty acid. Functionally, hydrolyzes the sphingolipid ceramide into sphingosine and free fatty acid at an optimal pH of 6.5-7.5. Acts as a key regulator of sphingolipid signaling metabolites by generating sphingosine at the cell surface. Regulates synaptic vesicle exocytosis and trafficking by controlling presynaptic terminal sphingolipid composition. The sequence is that of Neutral ceramidase (CDase) from Drosophila melanogaster (Fruit fly).